A 95-amino-acid chain; its full sequence is Small ribosomal subunit protein bS6 (95 aa).

It belongs to the bacterial ribosomal protein bS6 family.

Functionally, binds together with bS18 to 16S ribosomal RNA. This chain is Small ribosomal subunit protein bS6, found in Corynebacterium jeikeium (strain K411).